The sequence spans 271 residues: Large ribosomal subunit protein uL2 (271 aa).

The tract at residues 221 to 271 is disordered; sequence RGVAMNPVDHPMGGGEGKSSGGHPRNRNGIPSNGFKTRNKKKITNKYIIKK. The segment covering 257-271 has biased composition (basic residues); that stretch reads TRNKKKITNKYIIKK.

This sequence belongs to the universal ribosomal protein uL2 family. As to quaternary structure, part of the 50S ribosomal subunit. Forms a bridge to the 30S subunit in the 70S ribosome.

One of the primary rRNA binding proteins. Required for association of the 30S and 50S subunits to form the 70S ribosome, for tRNA binding and peptide bond formation. It has been suggested to have peptidyltransferase activity; this is somewhat controversial. Makes several contacts with the 16S rRNA in the 70S ribosome. The sequence is that of Large ribosomal subunit protein uL2 from Karelsulcia muelleri (strain GWSS) (Sulcia muelleri).